The following is a 194-amino-acid chain: Probable proteasome subunit beta type-4 (194 aa).

This sequence belongs to the peptidase T1B family. In terms of assembly, the 26S proteasome consists of a 20S proteasome core and two 19S regulatory subunits. The 20S proteasome core is composed of 28 subunits that are arranged in four stacked rings, resulting in a barrel-shaped structure. The two end rings are each formed by seven alpha subunits, and the two central rings are each formed by seven beta subunits. The catalytic chamber with the active sites is on the inside of the barrel.

Its subcellular location is the cytoplasm. It is found in the nucleus. In terms of biological role, non-catalytic component of the proteasome, a multicatalytic proteinase complex which is characterized by its ability to cleave peptides with Arg, Phe, Tyr, Leu, and Glu adjacent to the leaving group at neutral or slightly basic pH. The proteasome has an ATP-dependent proteolytic activity. The chain is Probable proteasome subunit beta type-4 from Schizosaccharomyces pombe (strain 972 / ATCC 24843) (Fission yeast).